The chain runs to 493 residues: Protein nucleotidyltransferase YdiU (493 aa).

Residues G96, G98, R99, K119, D131, G132, R182, and R189 each coordinate ATP. The active-site Proton acceptor is D258. Mg(2+)-binding residues include N259 and D268. Position 268 (D268) interacts with ATP. A disordered region spans residues 471-493; that stretch reads EKYTEFKNPPAPKERVSQTFCGT.

It belongs to the SELO family. The cofactor is Mg(2+). Mn(2+) is required as a cofactor.

It catalyses the reaction L-seryl-[protein] + ATP = 3-O-(5'-adenylyl)-L-seryl-[protein] + diphosphate. The catalysed reaction is L-threonyl-[protein] + ATP = 3-O-(5'-adenylyl)-L-threonyl-[protein] + diphosphate. It carries out the reaction L-tyrosyl-[protein] + ATP = O-(5'-adenylyl)-L-tyrosyl-[protein] + diphosphate. The enzyme catalyses L-histidyl-[protein] + UTP = N(tele)-(5'-uridylyl)-L-histidyl-[protein] + diphosphate. It catalyses the reaction L-seryl-[protein] + UTP = O-(5'-uridylyl)-L-seryl-[protein] + diphosphate. The catalysed reaction is L-tyrosyl-[protein] + UTP = O-(5'-uridylyl)-L-tyrosyl-[protein] + diphosphate. Nucleotidyltransferase involved in the post-translational modification of proteins. It can catalyze the addition of adenosine monophosphate (AMP) or uridine monophosphate (UMP) to a protein, resulting in modifications known as AMPylation and UMPylation. This is Protein nucleotidyltransferase YdiU from Nitrosococcus oceani (strain ATCC 19707 / BCRC 17464 / JCM 30415 / NCIMB 11848 / C-107).